The sequence spans 189 residues: GMP synthase [glutamine-hydrolyzing] subunit A (189 aa).

Residues 1-189 enclose the Glutamine amidotransferase type-1 domain; the sequence is MIVILNNGGQ…CKKCGFEFEE (189 aa). The active-site Nucleophile is C76. Catalysis depends on residues H163 and E165.

In terms of assembly, heterodimer composed of a glutamine amidotransferase subunit (A) and a GMP-binding subunit (B).

It catalyses the reaction XMP + L-glutamine + ATP + H2O = GMP + L-glutamate + AMP + diphosphate + 2 H(+). Its pathway is purine metabolism; GMP biosynthesis; GMP from XMP (L-Gln route): step 1/1. Catalyzes the synthesis of GMP from XMP. The protein is GMP synthase [glutamine-hydrolyzing] subunit A of Methanococcus maripaludis (strain C6 / ATCC BAA-1332).